A 289-amino-acid chain; its full sequence is ADP-polyphosphate phosphotransferase (289 aa).

Belongs to the polyphosphate kinase 2 (PPK2) family. Class I subfamily.

It catalyses the reaction [phosphate](n) + ATP = [phosphate](n+1) + ADP. Uses inorganic polyphosphate (polyP) as a donor to convert ADP to ATP. The sequence is that of ADP-polyphosphate phosphotransferase from Rhodopseudomonas palustris (strain ATCC BAA-98 / CGA009).